A 437-amino-acid chain; its full sequence is Branched-chain amino acid transport system 3 carrier protein (437 aa).

Transmembrane regions (helical) follow at residues 9–29 (ILAL…IIFP), 40–60 (VWLA…ITVI), 79–99 (YAGG…FAIP), 120–140 (ALFV…LYPG), 155–175 (ILAL…PIGT), 189–209 (FVNG…IVIV), 226–246 (YAIV…VSLF), 277–297 (LGSS…AVGL), 316–336 (LVII…TKLI), 342–362 (VLTA…CIGL), 369–389 (ILAP…LKAA), and 399–419 (LLHL…VATL).

Belongs to the branched chain amino acid transporter family.

It is found in the cell inner membrane. Functionally, component of the LIV-III transport system for branched-chain amino acids. BraZ is specific for isoleucine and valine. The LIV-III transport system may be H(+)-coupled. In Pseudomonas aeruginosa (strain ATCC 15692 / DSM 22644 / CIP 104116 / JCM 14847 / LMG 12228 / 1C / PRS 101 / PAO1), this protein is Branched-chain amino acid transport system 3 carrier protein (braZ).